The primary structure comprises 248 residues: Uracil-DNA glycosylase (248 aa).

Asp85 serves as the catalytic Proton acceptor.

Belongs to the uracil-DNA glycosylase (UDG) superfamily. UNG family.

The protein resides in the cytoplasm. The catalysed reaction is Hydrolyzes single-stranded DNA or mismatched double-stranded DNA and polynucleotides, releasing free uracil.. In terms of biological role, excises uracil residues from the DNA which can arise as a result of misincorporation of dUMP residues by DNA polymerase or due to deamination of cytosine. This chain is Uracil-DNA glycosylase, found in Deinococcus deserti (strain DSM 17065 / CIP 109153 / LMG 22923 / VCD115).